The following is a 647-amino-acid chain: Chaperone protein DnaK (647 aa).

Position 198 is a phosphothreonine; by autocatalysis (Thr-198). 3 stretches are compositionally biased toward basic and acidic residues: residues 514-529, 540-557, and 600-622; these read AEAN…ESVD, STEK…DADK, and SQEK…KDDN. 2 disordered regions span residues 514-557 and 596-647; these read AEAN…DADK and AIYK…EKSA. The segment covering 623-632 has biased composition (acidic residues); sequence VVDADFEEVK. Basic and acidic residues predominate over residues 633–647; that stretch reads EESKEGKEEDKEKSA.

Belongs to the heat shock protein 70 family.

Functionally, acts as a chaperone. This is Chaperone protein DnaK from Pelagibacter ubique (strain HTCC1062).